A 468-amino-acid chain; its full sequence is 6-phosphogluconate dehydrogenase, decarboxylating (468 aa).

NADP(+) is bound by residues 9–14 (GLAVMG), 32–34 (NRS), 73–75 (VKA), and Asn-101. Residues Asn-101 and 127–129 (SGG) contribute to the substrate site. Catalysis depends on Lys-182, which acts as the Proton acceptor. 185–186 (HN) contributes to the substrate binding site. Glu-189 (proton donor) is an active-site residue. 5 residues coordinate substrate: Tyr-190, Lys-259, Arg-286, Arg-444, and His-450.

Belongs to the 6-phosphogluconate dehydrogenase family. As to quaternary structure, homodimer.

It carries out the reaction 6-phospho-D-gluconate + NADP(+) = D-ribulose 5-phosphate + CO2 + NADPH. It functions in the pathway carbohydrate degradation; pentose phosphate pathway; D-ribulose 5-phosphate from D-glucose 6-phosphate (oxidative stage): step 3/3. In terms of biological role, catalyzes the oxidative decarboxylation of 6-phosphogluconate to ribulose 5-phosphate and CO(2), with concomitant reduction of NADP to NADPH. This chain is 6-phosphogluconate dehydrogenase, decarboxylating (gnd), found in Staphylococcus epidermidis (strain ATCC 35984 / DSM 28319 / BCRC 17069 / CCUG 31568 / BM 3577 / RP62A).